A 96-amino-acid polypeptide reads, in one-letter code: Small ribosomal subunit protein uS19 (96 aa).

A disordered region spans residues 1–30; it reads MARSIKKGPFADKHLTKKVEDANKGNKKSV. The span at 9–24 shows a compositional bias: basic and acidic residues; that stretch reads PFADKHLTKKVEDANK.

It belongs to the universal ribosomal protein uS19 family.

Protein S19 forms a complex with S13 that binds strongly to the 16S ribosomal RNA. The protein is Small ribosomal subunit protein uS19 of Anaeromyxobacter sp. (strain Fw109-5).